The primary structure comprises 1684 residues: Protein MON2 homolog (1684 aa).

The protein belongs to the MON2 family.

May be required for traffic between late Golgi and early endosomes. In Drosophila melanogaster (Fruit fly), this protein is Protein MON2 homolog (mon2).